Reading from the N-terminus, the 341-residue chain is HMG box-containing protein C10F6.08c (341 aa).

Positions serine 68–glutamine 77 are enriched in basic and acidic residues. Disordered stretches follow at residues serine 68–lysine 195 and leucine 236–alanine 341. Composition is skewed to polar residues over residues aspartate 116 to glutamine 157 and asparagine 165 to leucine 177. Low complexity predominate over residues lysine 178–lysine 195. Positions lysine 195–serine 263 form a DNA-binding region, HMG box. Composition is skewed to basic and acidic residues over residues glutamate 238–arginine 256 and lysine 269–glutamate 304. Phosphothreonine is present on residues threonine 314 and threonine 315. Phosphoserine is present on serine 316.

The protein resides in the nucleus. This chain is HMG box-containing protein C10F6.08c, found in Schizosaccharomyces pombe (strain 972 / ATCC 24843) (Fission yeast).